We begin with the raw amino-acid sequence, 533 residues long: Putative adhesin domain-containing protein LiaX (533 aa).

Residues 1 to 277 form a binds the antibiotic daptomycin (DAP) and the antimicrobial peptide human LL-37, under physiologically relevant concentrations. Protects the OG1RF and S613 strains from LL-37-mediated killing in a concentration-dependent manner region; it reads MKERERVLEL…EFNYPNPQAS (277 aa). Residues 63–89 form a disordered region; the sequence is NALEKGESEGPTVDSFEENTQDSAEKD. Positions 83–186 form a coiled coil; the sequence is QDSAEKDREN…EEELKNIRKE (104 aa). A putative adhesin region region spans residues 279–526; the sequence is IDVKVANGTV…INASTTTGSI (248 aa). An involved in cell membrane remodeling region spans residues 289-526; it reads VFKTWDQEDV…INASTTTGSI (238 aa).

May undergo proteolytic cleavage, allowing release of the N-terminal region into the extracellular environment.

It localises to the secreted. Its subcellular location is the cell wall. The protein localises to the cell membrane. In terms of biological role, involved in cell membrane remodeling, perhaps acting by negative modulation of the liaFSR and liaXYZ gene clusters, thereby regulating content and localization of anionic phospholipids. Binds to the antibiotic daptomycin (DAP) and to cationic antimicrobial peptides, such as human LL-37, perhaps functioning as a sensor that activates the cell envelope stress response. This chain is Putative adhesin domain-containing protein LiaX, found in Enterococcus faecalis (strain ATCC 700802 / V583).